The following is a 304-amino-acid chain: Homoserine kinase (304 aa).

90-100 (PLARGLGSSAS) is a binding site for ATP.

The protein belongs to the GHMP kinase family. Homoserine kinase subfamily.

It is found in the cytoplasm. The enzyme catalyses L-homoserine + ATP = O-phospho-L-homoserine + ADP + H(+). Its pathway is amino-acid biosynthesis; L-threonine biosynthesis; L-threonine from L-aspartate: step 4/5. Catalyzes the ATP-dependent phosphorylation of L-homoserine to L-homoserine phosphate. The chain is Homoserine kinase from Staphylococcus aureus (strain bovine RF122 / ET3-1).